The following is a 379-amino-acid chain: Phospholipase A1 (379 aa).

The N-terminal stretch at 1–20 (MKFITAILVIFCVYLLSTAG) is a signal peptide. Positions 21–73 (DSKILPLKKLPSKIFGHLKSHVDNTVKKPLKVFGHLKSHVENSVGPLRMNKLT) are excised as a propeptide. Residues C76 and C154 are joined by a disulfide bond. A glycan (N-linked (GlcNAc...) asparagine) is linked at N126. The active-site Nucleophile is S204. The active-site Charge relay system is D232. Cystine bridges form between C243–C248 and C285–C291. Residue H293 is the Charge relay system of the active site.

It belongs to the AB hydrolase superfamily. Lipase family. In terms of processing, contains five disulfide bonds. As to expression, expressed by the venom gland.

Its subcellular location is the secreted. It carries out the reaction a 1,2-diacyl-sn-glycero-3-phosphocholine + H2O = a 2-acyl-sn-glycero-3-phosphocholine + a fatty acid + H(+). In terms of biological role, catalyzes the hydrolysis of phosphatidylcholine with phospholipase A1 activity. May act as an allergen and induce hemolytic activity. This chain is Phospholipase A1, found in Dinoponera quadriceps (South American ant).